A 469-amino-acid chain; its full sequence is tRNA(Ile)-lysidine synthase (469 aa).

Position 26–31 (26–31 (SGGPDS)) interacts with ATP.

It belongs to the tRNA(Ile)-lysidine synthase family.

The protein localises to the cytoplasm. The enzyme catalyses cytidine(34) in tRNA(Ile2) + L-lysine + ATP = lysidine(34) in tRNA(Ile2) + AMP + diphosphate + H(+). Functionally, ligates lysine onto the cytidine present at position 34 of the AUA codon-specific tRNA(Ile) that contains the anticodon CAU, in an ATP-dependent manner. Cytidine is converted to lysidine, thus changing the amino acid specificity of the tRNA from methionine to isoleucine. In Clostridium perfringens (strain 13 / Type A), this protein is tRNA(Ile)-lysidine synthase.